The chain runs to 285 residues: NADPH-dependent 7-cyano-7-deazaguanine reductase (285 aa).

91–93 (IES) is a binding site for substrate. 93 to 94 (SK) provides a ligand contact to NADPH. The Thioimide intermediate role is filled by C193. The active-site Proton donor is the D200. Substrate is bound at residue 232-233 (HE). 261–262 (RG) is a binding site for NADPH.

Belongs to the GTP cyclohydrolase I family. QueF type 2 subfamily. As to quaternary structure, homodimer.

The protein resides in the cytoplasm. The enzyme catalyses 7-aminomethyl-7-carbaguanine + 2 NADP(+) = 7-cyano-7-deazaguanine + 2 NADPH + 3 H(+). It functions in the pathway tRNA modification; tRNA-queuosine biosynthesis. In terms of biological role, catalyzes the NADPH-dependent reduction of 7-cyano-7-deazaguanine (preQ0) to 7-aminomethyl-7-deazaguanine (preQ1). The polypeptide is NADPH-dependent 7-cyano-7-deazaguanine reductase (Shewanella baltica (strain OS223)).